The following is a 441-amino-acid chain: tRNA (adenine(37)-N6)-methyltransferase (441 aa).

Residues 30 to 168 (TEPVGYLESC…YIAEYDSPQN (139 aa)) form the TsaA-like domain. Residues 47-49 (PRQ), 90-91 (HK), arginine 117, leucine 127, and 148-151 (IHGT) each bind S-adenosyl-L-methionine. Over residues 179-192 (QNNQHTPNTVSQSD) the composition is skewed to polar residues. 2 disordered regions span residues 179–231 (QNNQ…EENY) and 264–284 (SSVAEEQIGPYCPEKSFSEKG).

The protein belongs to the tRNA methyltransferase O family.

The catalysed reaction is N(6)-L-threonylcarbamoyladenosine(37) in tRNA + S-adenosyl-L-methionine = N(6)-methyl,N(6)-L-threonylcarbamoyladenosine(37) in tRNA + S-adenosyl-L-homocysteine + H(+). In terms of biological role, S-adenosyl-L-methionine-dependent methyltransferase responsible for the addition of the methyl group in the formation of N6-methyl-N6-threonylcarbamoyladenosine at position 37 (m(6)t(6)A37) of the tRNA anticodon loop of tRNA(Ser)(GCU). The methyl group of m(6)t(6)A37 may improve the efficiency of the tRNA decoding ability. The protein is tRNA (adenine(37)-N6)-methyltransferase of Homo sapiens (Human).